The primary structure comprises 190 residues: MSQPRPGHRPDCNGADPDSNFASMTHSARPFTEVVIEADCWQAEASAEATVLRAIETAADAVDADTGGAELAVMLTDDDHIRQLNASFRGKDKPTNVLSFPAAQPEVQPDGAPRMLGDIAIAYQTVRREADDEGKPFDHHLSHLAVHGFLHLVGYDHETEEEAEEMEDAERAILARLGIPDPYAGQDRVS.

Residues 1–25 (MSQPRPGHRPDCNGADPDSNFASMT) are disordered. Residues His-147, His-151, and His-157 each contribute to the Zn(2+) site.

It belongs to the endoribonuclease YbeY family. It depends on Zn(2+) as a cofactor.

It is found in the cytoplasm. Its function is as follows. Single strand-specific metallo-endoribonuclease involved in late-stage 70S ribosome quality control and in maturation of the 3' terminus of the 16S rRNA. This is Endoribonuclease YbeY from Rhodopseudomonas palustris (strain ATCC BAA-98 / CGA009).